The sequence spans 355 residues: Mu-like prophage FluMu protein gp47 (355 aa).

Belongs to the Mu gp47/PBSX XkdT family.

In Haemophilus influenzae (strain ATCC 51907 / DSM 11121 / KW20 / Rd), this protein is Mu-like prophage FluMu protein gp47.